The primary structure comprises 862 residues: Linoleate 9S-lipoxygenase 1 (862 aa).

In terms of domain architecture, PLAT spans 44–171 (FGAATDIVGG…SYKRDRIFFA (128 aa)). Residues 174–862 (TYLPNETPAS…FRGIPNSISI (689 aa)) form the Lipoxygenase domain. A disordered region spans residues 225–257 (KNLARTTLGGSSDFPYPRRGRTGRKSTRKDPKC). Over residues 242–251 (RRGRTGRKST) the composition is skewed to basic residues. Residues histidine 522, histidine 527, histidine 713, asparagine 717, and isoleucine 862 each contribute to the Fe cation site.

Belongs to the lipoxygenase family. In terms of assembly, monomer. Requires Fe cation as cofactor.

The protein localises to the cytoplasm. It carries out the reaction (9Z,12Z)-octadecadienoate + O2 = (13S)-hydroperoxy-(9Z,11E)-octadecadienoate. It catalyses the reaction (9Z,12Z,15Z)-octadecatrienoate + O2 = (13S)-hydroperoxy-(9Z,11E,15Z)-octadecatrienoate. The catalysed reaction is (9Z,12Z)-octadecadienoate + O2 = (9S)-hydroperoxy-(10E,12Z)-octadecadienoate. It functions in the pathway lipid metabolism; oxylipin biosynthesis. Plant lipoxygenase may be involved in a number of diverse aspects of plant physiology including growth and development, pest resistance, and senescence or responses to wounding. It catalyzes the hydroperoxidation of lipids containing a cis,cis-1,4-pentadiene structure. In Phaseolus vulgaris (Kidney bean), this protein is Linoleate 9S-lipoxygenase 1 (LOXA).